The following is a 689-amino-acid chain: Glycine--tRNA ligase beta subunit (689 aa).

Belongs to the class-II aminoacyl-tRNA synthetase family. In terms of assembly, tetramer of two alpha and two beta subunits.

Its subcellular location is the cytoplasm. It catalyses the reaction tRNA(Gly) + glycine + ATP = glycyl-tRNA(Gly) + AMP + diphosphate. The polypeptide is Glycine--tRNA ligase beta subunit (Salmonella schwarzengrund (strain CVM19633)).